The primary structure comprises 208 residues: V-type proton ATPase subunit E (208 aa).

This sequence belongs to the V-ATPase E subunit family.

Its function is as follows. Produces ATP from ADP in the presence of a proton gradient across the membrane. The polypeptide is V-type proton ATPase subunit E (Chlamydia trachomatis serovar L2 (strain ATCC VR-902B / DSM 19102 / 434/Bu)).